The following is a 204-amino-acid chain: MKVSSAEFVTSGTRPAHYPPPELPEVAFAGRSNVGKSSLINVLVNRKGLVRTSSTPGRTQLINFFRVNGSLMLVDLPGYGFAKVPLAVKKEWGPMVETYLSTRPNLSCVVLIVDIRREPTEEDQLMLQWLRAYNVAVLVVVTKCDKVSKNERAKQAAIITRTLGLARDEMAFFSALSKEGRDEVWARIEVMLAAGQEEAEESGE.

Residues 1-21 are disordered; it reads MKVSSAEFVTSGTRPAHYPPP. The EngB-type G domain maps to 22-194; that stretch reads ELPEVAFAGR…WARIEVMLAA (173 aa). GTP contacts are provided by residues 30-37, 57-61, 75-78, 142-145, and 173-175; these read GRSNVGKS, GRTQL, DLPG, TKCD, and FSA. 2 residues coordinate Mg(2+): Ser-37 and Thr-59.

Belongs to the TRAFAC class TrmE-Era-EngA-EngB-Septin-like GTPase superfamily. EngB GTPase family. The cofactor is Mg(2+).

Functionally, necessary for normal cell division and for the maintenance of normal septation. The polypeptide is Probable GTP-binding protein EngB (Geobacter metallireducens (strain ATCC 53774 / DSM 7210 / GS-15)).